Consider the following 65-residue polypeptide: Large ribosomal subunit protein uL29 (65 aa).

The protein belongs to the universal ribosomal protein uL29 family.

This chain is Large ribosomal subunit protein uL29, found in Syntrophus aciditrophicus (strain SB).